A 492-amino-acid polypeptide reads, in one-letter code: Beclin 1-associated autophagy-related key regulator (492 aa).

S29 is subject to Phosphoserine. Residues 70–180 (RDRERFIDKK…KLGDLVEKKT (111 aa)) are a coiled coil. 2 disordered regions span residues 213-232 (TSGRDPADVSSETDSAMTSS) and 411-473 (GVAG…AGGM). Positions 222–232 (SSETDSAMTSS) are enriched in polar residues. A Phosphoserine modification is found at S416. Acidic residues predominate over residues 424 to 433 (VSDEETDLGT). At T429 the chain carries Phosphothreonine. Residues 447-473 (PSQPVEVSQSQSTQASPPIASSSAGGM) are compositionally biased toward low complexity.

This sequence belongs to the ATG14 family. As to quaternary structure, forms homooligomers; homo-oligomerization is essential for the roles in membrane tethering and enhancement of SNARE-mediated fusion. Component of the PI3K (PI3KC3/PI3K-III/class III phosphatidylinositol 3-kinase) complex I (PI3KC3-C1) in which the core composed of the catalytic subunit PIK3C3, the regulatory subunit PIK3R4 and BECN1 is associated with ATG14. PI3KC3-C1 displays a V-shaped architecture with PIK3R4 serving as a bridge between PIK3C3 and the ATG14:BECN1 subcomplex. PI3KC3-C1 can associate with further regulatory subunits. Interacts with PIK3CB. Interacts (via coiled-coil domain) with BECN2 (via coiled-coil domain); this interaction is tighter than BECN2 self-association. Interacts with the STX17-SNAP29 binary t-SNARE complex. Interacts with NRBF2. Interacts with PIK3C3 and BECN1; this interaction is increased in the absence of TMEM39A. Interacts with STEEP1; the interaction is required for trafficking of STING1 from the endoplasmic reticulum. Interacts with ARMC3 (via ARM domains). Post-translationally, ubiquitinated via 'Lys-6', 'Lys-11' and 'Lys-63'-linked polyubiquitin chains on multiple lysines by MARCHF7, leading to ATG14 aggregation and loss of interaction with STX17.

The protein localises to the cytoplasm. Its subcellular location is the endoplasmic reticulum membrane. It is found in the preautophagosomal structure membrane. Functionally, required for both basal and inducible autophagy. Determines the localization of the autophagy-specific PI3-kinase complex. Plays a role in autophagosome formation and MAP1LC3/LC3 conjugation to phosphatidylethanolamine. Promotes BECN1 translocation from the trans-Golgi network to autophagosomes. Enhances PIK3C3 activity in a BECN1-dependent manner. Essential for the autophagy-dependent phosphorylation of BECN1. Stimulates the phosphorylation of BECN1, but suppresses the phosphorylation PIK3C3 by AMPK. Binds to STX17-SNAP29 binary t-SNARE complex on autophagosomes and primes it for VAMP8 interaction to promote autophagosome-endolysosome fusion. Modulates the hepatic lipid metabolism. The chain is Beclin 1-associated autophagy-related key regulator from Rattus norvegicus (Rat).